Reading from the N-terminus, the 359-residue chain is 5-amino-6-(D-ribitylamino)uracil--L-tyrosine 4-hydroxyphenyl transferase 1 (359 aa).

A Radical SAM core domain is found at valine 45–lysine 282. [4Fe-4S] cluster is bound by residues cysteine 59, cysteine 63, and cysteine 66.

The protein belongs to the radical SAM superfamily. CofH family. As to quaternary structure, consists of two subunits, CofG and CofH. Requires [4Fe-4S] cluster as cofactor.

The catalysed reaction is 5-amino-6-(D-ribitylamino)uracil + L-tyrosine + S-adenosyl-L-methionine = 5-amino-5-(4-hydroxybenzyl)-6-(D-ribitylimino)-5,6-dihydrouracil + 2-iminoacetate + 5'-deoxyadenosine + L-methionine + H(+). It participates in cofactor biosynthesis; coenzyme F0 biosynthesis. Its function is as follows. Catalyzes the radical-mediated synthesis of 5-amino-5-(4-hydroxybenzyl)-6-(D-ribitylimino)-5,6-dihydrouracil from 5-amino-6-(D-ribitylamino)uracil and L-tyrosine. This chain is 5-amino-6-(D-ribitylamino)uracil--L-tyrosine 4-hydroxyphenyl transferase 1, found in Methanococcus maripaludis (strain DSM 14266 / JCM 13030 / NBRC 101832 / S2 / LL).